The primary structure comprises 20 residues: M-poneritoxin-Ng1f (20 aa).

Lys-20 bears the Lysine amide mark.

Expressed by the venom gland.

It localises to the secreted. The protein resides in the target cell membrane. Its function is as follows. Has activity against Gram-positive bacteria. Has insecticidal and hemolytic activities. May act by disrupting the integrity of the bacterial cell membrane. The protein is M-poneritoxin-Ng1f of Neoponera goeldii (Ponerine ant).